The chain runs to 446 residues: Protein dyf-7 (446 aa).

The signal sequence occupies residues 1 to 24 (MNQLWRASCLQVLITFLLIHQNKA). The region spanning 35–295 (DCIADSFTVV…KTCYKKVSDS (261 aa)) is the ZP domain. Cys-211 and Cys-273 form a disulfide bridge. A helical membrane pass occupies residues 377-397 (IPLIIMGSLASLLLFSAGAAI).

In terms of assembly, monomer under reducing conditions. Homodimer under non-reducing conditions. May also form higher order oligomers. In terms of processing, proteolytically cleaved and secreted in vitro. In the embryo, expressed in the excretory cell and, during dendrite formation, in the non-neuronal cells surrounding the sensory neurons, including hypodermal cells.

It is found in the cell membrane. The protein localises to the cell projection. It localises to the dendrite. The protein resides in the secreted. Its function is as follows. Required for permeability of amphid and phasmid neurons to external dyes, chemotaxis to ammonium chloride, avoidance of high osmotic stimuli, male mating and dauer formation. Along with dex-1, enables neurite growth and maintenance by anchoring amphid dendritic tips during neuron cell body migration in embryonic and larval development. This chain is Protein dyf-7, found in Caenorhabditis elegans.